The chain runs to 78 residues: Putative defensin-like protein 202 (78 aa).

The N-terminal stretch at 1–29 is a signal peptide; it reads MAKTQNFVCFTAVLLILILVSTEIPMIEG. 3 disulfide bridges follow: C44–C65, C49–C74, and C53–C76.

It belongs to the DEFL family.

It is found in the secreted. This Arabidopsis thaliana (Mouse-ear cress) protein is Putative defensin-like protein 202.